Consider the following 348-residue polypeptide: Protein RecA (348 aa).

ATP is bound at residue 69 to 76; it reads GPESSGKT.

This sequence belongs to the RecA family.

Its subcellular location is the cytoplasm. Can catalyze the hydrolysis of ATP in the presence of single-stranded DNA, the ATP-dependent uptake of single-stranded DNA by duplex DNA, and the ATP-dependent hybridization of homologous single-stranded DNAs. It interacts with LexA causing its activation and leading to its autocatalytic cleavage. The chain is Protein RecA from Picosynechococcus sp. (strain ATCC 27264 / PCC 7002 / PR-6) (Agmenellum quadruplicatum).